A 69-amino-acid polypeptide reads, in one-letter code: Alpha-conotoxin SrIA/SrIB (69 aa).

An N-terminal signal peptide occupies residues 1–21 (MGMRMMFTVFLLVVLATTVVS). Positions 22-48 (FTSDSAFDSRNVAANDKVSDMIALTAR) are excised as a propeptide. 2 cysteine pairs are disulfide-bonded: Cys-51–Cys-57 and Cys-52–Cys-65. Positions 53–55 (SRP) are ser-Xaa-Pro motif, crucial for potent interaction with nAChR. Pro-55 carries the 4-hydroxyproline; in form Sr1A and Sr1B modification. At Glu-60 the chain carries 4-carboxyglutamate; in form Sr1A. A 4-carboxyglutamate; in form Sr1A and Sr1B modification is found at Glu-63. Position 66 is a glycine amide; in form Sr1A and Sr1B (Gly-66).

Belongs to the conotoxin A superfamily. In terms of processing, occurs in 2 forms which differ in the post-translational modification of Glu-60. In form SrA1 Glu-60 is 4-carboxyglutamate while in form SrA2 Glu-60 is unmodified. As to expression, expressed by the venom duct.

It localises to the secreted. Alpha-conotoxins act on postsynaptic membranes, they bind to the nicotinic acetylcholine receptors (nAChR) and thus inhibit them. Has weak blocking effects on muscle nAChR composed of alpha-1/beta-1/gamma/delta subunits and the central nervous system nAChR composed of alpha-4/beta-2 subunits. Does not detectably affect the peripheral nervous system nAChR composed of alpha-3/beta-4 subunits. Low toxin concentrations potentiate currents in muscle nAChR composed of alpha-1/beta-1/gamma/delta subunits and central nervous system nAChR composed of alpha-4/beta-2 subunits, but not the peripheral nervous system nAChR composed of alpha-3/beta-4 subunits. The protein is Alpha-conotoxin SrIA/SrIB of Conus spurius (Alphabet cone).